A 100-amino-acid polypeptide reads, in one-letter code: Urease subunit gamma (100 aa).

Belongs to the urease gamma subunit family. Heterotrimer of UreA (gamma), UreB (beta) and UreC (alpha) subunits. Three heterotrimers associate to form the active enzyme.

The protein localises to the cytoplasm. The catalysed reaction is urea + 2 H2O + H(+) = hydrogencarbonate + 2 NH4(+). It participates in nitrogen metabolism; urea degradation; CO(2) and NH(3) from urea (urease route): step 1/1. In Cereibacter sphaeroides (strain ATCC 17029 / ATH 2.4.9) (Rhodobacter sphaeroides), this protein is Urease subunit gamma.